Here is a 556-residue protein sequence, read N- to C-terminus: Potassium-transporting ATPase potassium-binding subunit (556 aa).

10 helical membrane-spanning segments follow: residues 6–26, 65–85, 133–153, 176–196, 249–269, 283–303, 378–398, 419–439, 483–503, and 526–546; these read AGLI…VPLG, GVLA…LVQG, GLAV…VALV, LRIL…GGAI, PTAW…FSLP, YAIA…MLWF, GLYG…LMVG, YFLV…ALPG, ALGL…LALA, and FVGM…LPML.

The protein belongs to the KdpA family. In terms of assembly, the system is composed of three essential subunits: KdpA, KdpB and KdpC.

It localises to the cell membrane. In terms of biological role, part of the high-affinity ATP-driven potassium transport (or Kdp) system, which catalyzes the hydrolysis of ATP coupled with the electrogenic transport of potassium into the cytoplasm. This subunit binds the extracellular potassium ions and delivers the ions to the membrane domain of KdpB through an intramembrane tunnel. The chain is Potassium-transporting ATPase potassium-binding subunit from Mycolicibacterium paratuberculosis (strain ATCC BAA-968 / K-10) (Mycobacterium paratuberculosis).